A 204-amino-acid chain; its full sequence is Methylthioribulose-1-phosphate dehydratase (204 aa).

Positions 94 and 96 each coordinate Zn(2+).

Belongs to the aldolase class II family. MtnB subfamily. The cofactor is Zn(2+).

It catalyses the reaction 5-(methylsulfanyl)-D-ribulose 1-phosphate = 5-methylsulfanyl-2,3-dioxopentyl phosphate + H2O. The protein operates within amino-acid biosynthesis; L-methionine biosynthesis via salvage pathway; L-methionine from S-methyl-5-thio-alpha-D-ribose 1-phosphate: step 2/6. In terms of biological role, catalyzes the dehydration of methylthioribulose-1-phosphate (MTRu-1-P) into 2,3-diketo-5-methylthiopentyl-1-phosphate (DK-MTP-1-P). The protein is Methylthioribulose-1-phosphate dehydratase of Pseudomonas savastanoi pv. phaseolicola (strain 1448A / Race 6) (Pseudomonas syringae pv. phaseolicola (strain 1448A / Race 6)).